The chain runs to 456 residues: Serine--tRNA ligase (456 aa).

252-254 (TSE) contributes to the L-serine binding site. Residues 283–285 (RKE) and valine 299 contribute to the ATP site. Glutamate 306 serves as a coordination point for L-serine. 370-373 (ELVS) provides a ligand contact to ATP. Threonine 404 is a binding site for L-serine.

This sequence belongs to the class-II aminoacyl-tRNA synthetase family. Type-1 seryl-tRNA synthetase subfamily. In terms of assembly, homodimer. The tRNA molecule binds across the dimer.

Its subcellular location is the cytoplasm. It carries out the reaction tRNA(Ser) + L-serine + ATP = L-seryl-tRNA(Ser) + AMP + diphosphate + H(+). The catalysed reaction is tRNA(Sec) + L-serine + ATP = L-seryl-tRNA(Sec) + AMP + diphosphate + H(+). Its pathway is aminoacyl-tRNA biosynthesis; selenocysteinyl-tRNA(Sec) biosynthesis; L-seryl-tRNA(Sec) from L-serine and tRNA(Sec): step 1/1. Functionally, catalyzes the attachment of serine to tRNA(Ser). Is also able to aminoacylate tRNA(Sec) with serine, to form the misacylated tRNA L-seryl-tRNA(Sec), which will be further converted into selenocysteinyl-tRNA(Sec). The protein is Serine--tRNA ligase of Korarchaeum cryptofilum (strain OPF8).